The primary structure comprises 70 residues: Small ribosomal subunit protein bS21 (70 aa).

The protein belongs to the bacterial ribosomal protein bS21 family.

The sequence is that of Small ribosomal subunit protein bS21 from Polynucleobacter asymbioticus (strain DSM 18221 / CIP 109841 / QLW-P1DMWA-1) (Polynucleobacter necessarius subsp. asymbioticus).